The sequence spans 907 residues: Dual serine/threonine and tyrosine protein kinase (907 aa).

Residues 373-409 (RKKENELYESLMNIANRKQEEMKDMIVETLNTMKEEL) are a coiled coil. The region spanning 630–884 (PKLGQELGRG…PLLGIVQPML (255 aa)) is the Protein kinase domain. Residues 636–644 (LGRGQYGVV) and lysine 659 each bind ATP. Aspartate 755 serves as the catalytic Proton acceptor.

It belongs to the protein kinase superfamily. Ser/Thr protein kinase family.

It localises to the cytoplasm. The protein resides in the cell membrane. It is found in the apical cell membrane. The protein localises to the basolateral cell membrane. Its subcellular location is the cell junction. The enzyme catalyses L-seryl-[protein] + ATP = O-phospho-L-seryl-[protein] + ADP + H(+). It catalyses the reaction L-threonyl-[protein] + ATP = O-phospho-L-threonyl-[protein] + ADP + H(+). It carries out the reaction L-tyrosyl-[protein] + ATP = O-phospho-L-tyrosyl-[protein] + ADP + H(+). In terms of biological role, acts as a positive regulator of ERK phosphorylation downstream of fibroblast growth factor-receptor activation. Involved in the regulation of both caspase-dependent apoptosis and caspase-independent cell death. In the skin, it plays a predominant role in suppressing caspase-dependent apoptosis in response to UV stress in a range of dermal cell types. In Macaca mulatta (Rhesus macaque), this protein is Dual serine/threonine and tyrosine protein kinase.